The following is a 123-amino-acid chain: MRWLTPFGMLFISGTYYGLIFFGLIMEVIHNALISLVLAFFVVFAWDLVLSLIYGLRFVKEGDYIALDWDGQFPDCYGLFASTCLSAVIWTYTDSLLLGLIVPVIIVFLGKQLMRGLYEKIKS.

This is an uncharacterized protein from Methanocaldococcus jannaschii (strain ATCC 43067 / DSM 2661 / JAL-1 / JCM 10045 / NBRC 100440) (Methanococcus jannaschii).